Reading from the N-terminus, the 167-residue chain is Photosystem I assembly protein Ycf3 (167 aa).

3 TPR repeats span residues 35-68, 72-105, and 120-153; these read AFTY…EIDP, SYIL…NPSL, and GEQA…APSN.

The protein belongs to the Ycf3 family.

The protein localises to the plastid. The protein resides in the chloroplast thylakoid membrane. In terms of biological role, essential for the assembly of the photosystem I (PSI) complex. May act as a chaperone-like factor to guide the assembly of the PSI subunits. The protein is Photosystem I assembly protein Ycf3 of Marchantia polymorpha (Common liverwort).